A 35-amino-acid chain; its full sequence is uncharacterized protein (35 aa).

The chain crosses the membrane as a helical span at residues 14–34 (VVVLLAICGAMLLLRWAAMIW).

Its subcellular location is the membrane. This is an uncharacterized protein from Escherichia coli (strain K12).